The primary structure comprises 347 residues: GMP reductase (347 aa).

108–131 (ADFEKTKQILDLNPALNFVCIDVA) lines the NADP(+) pocket. Positions 181 and 183 each coordinate K(+). The Thioimidate intermediate role is filled by cysteine 186. 216–239 (IVSDGGCTTPGDVAKAFGGGADFV) contacts NADP(+).

This sequence belongs to the IMPDH/GMPR family. GuaC type 1 subfamily. As to quaternary structure, homotetramer.

The catalysed reaction is IMP + NH4(+) + NADP(+) = GMP + NADPH + 2 H(+). Functionally, catalyzes the irreversible NADPH-dependent deamination of GMP to IMP. It functions in the conversion of nucleobase, nucleoside and nucleotide derivatives of G to A nucleotides, and in maintaining the intracellular balance of A and G nucleotides. The protein is GMP reductase of Escherichia coli (strain SMS-3-5 / SECEC).